Consider the following 488-residue polypeptide: Transmembrane protein 39A (488 aa).

Residues Asn31 and Asn39 are each glycosylated (N-linked (GlcNAc...) asparagine). The next 8 membrane-spanning stretches (helical) occupy residues 72–92 (SLLF…IQYI), 110–130 (TSLN…VMLA), 154–174 (VLIS…CWTL), 182–202 (SVLN…LCCF), 287–307 (EVLF…LCFV), 319–339 (CEHL…QLLP), 420–440 (LLNL…YSLL), and 446–466 (NHTL…FKLL).

Belongs to the TMEM39 family. As to quaternary structure, interacts with SACM1L, SEC23A and SEC24A. (Microbial infection) Interacts with encephalomyocarditis virus (EMCV) major capsid proteins VP1 and VP2. In terms of tissue distribution, up-regulated in brain tumor glioblastoma multiforme cells (at protein level).

The protein resides in the endoplasmic reticulum membrane. Functionally, regulates autophagy by controlling the spatial distribution and levels of the intracellular phosphatidylinositol 4-phosphate (PtdIns(4)P) pools. Modulates (PtdIns(4)P) levels by regulating the ER-to-Golgi trafficking of the phosphatidylinositide phosphatase SACM1L. (Microbial infection) Positively regulates the replication of encephalomyocarditis virus (EMCV) via autophagy-dependent pathway. The polypeptide is Transmembrane protein 39A (TMEM39A) (Homo sapiens (Human)).